A 670-amino-acid chain; its full sequence is MTEAKLTRGHSCVPCQHRKIRCNGQTPCAYCIRTGKECVRMRVSPSHSRNARLNHRRLTAAQTGSPSGDGQVIVSGDQRRYVEDNKLWKSLGDEMQGKDVSPDPERPPLRTRTDTPSTEVNLIFSHQRPTSISVKYPSAVHSFQLWQVFISNVHPLTKILHGPTVQKDILETFSEPTSTPGPTEALIFAIYLVAVVSLTDAECRSRFGEPRKDLLARYCNATEVALSKADFLRSTDLRVLQAFTLHLLSLRHICDHDILWLLTGLATRMGQRMGLHRESSLKDLPPFEAELRRRVWWQIVILDGRASQLTGASMNPNMQLYGDTQQPINLSDADLVPSASTIPQPSPITTDMLFCKVRIEIGVWMIEQKCLLGSESESSTTGKAKFFKAIDELERHIEEKYLANMDKELPLNLLTAYLARSAVCQLRLSVYHPIHRPERASDLSAEQIDMLLENSLEVIRYDILSHSTPALQCYLWHIANFFPFETFVLLISTLSGRPAGQVVDTAWEVIDQVYEHHPSFVSDTSDPLYWALGNITLKAWDQRVTSARTRGITVPRELPCIANLVHARATMARASSQQPSTTDVSGPATPQSLLLAQEAPVDYLGGLGTTNELASQTDLGMATGEELLGMMKGVDVDWDFWQQLLDGNGHDARARDDQETFYFSSFINKA.

A DNA-binding region (zn(2)-C6 fungal-type) is located at residues 12 to 38 (CVPCQHRKIRCNGQTPCAYCIRTGKEC). Disordered stretches follow at residues 57–76 (RLTA…IVSG) and 92–115 (GDEM…RTDT). The span at 92 to 113 (GDEMQGKDVSPDPERPPLRTRT) shows a compositional bias: basic and acidic residues.

It is found in the nucleus. Functionally, transcription factor that may participate in the regulation of the expression of the gene cluster that mediates the biosynthesis of aurofusarin, a red mycelium pigment which is acting as a mycotoxin. In Gibberella zeae (strain ATCC MYA-4620 / CBS 123657 / FGSC 9075 / NRRL 31084 / PH-1) (Wheat head blight fungus), this protein is Aurofusarin cluster transcription factor aurR2.